Reading from the N-terminus, the 573-residue chain is Putative cytochrome c oxidase subunit 1-beta (573 aa).

A helical transmembrane segment spans residues valine 53 to alanine 73. Histidine 100 provides a ligand contact to Fe(II)-heme a. The next 6 helical transmembrane spans lie at isoleucine 103–leucine 123, tryptophan 141–alanine 161, glycine 188–isoleucine 208, isoleucine 227–methionine 247, leucine 272–valine 292, and isoleucine 304–valine 324. Positions 278 and 282 each coordinate Cu cation. The segment at residues histidine 278 to tyrosine 282 is a cross-link (1'-histidyl-3'-tyrosine (His-Tyr)). The Cu cation site is built by histidine 327 and histidine 328. Transmembrane regions (helical) follow at residues methionine 329–valine 349 and methionine 373–isoleucine 393. Histidine 411 is a binding site for heme a3. 3 helical membrane passes run leucine 412–tryptophan 432, isoleucine 447–glycine 467, and isoleucine 490–tryptophan 510. Histidine 413 serves as a coordination point for Fe(II)-heme a.

Belongs to the heme-copper respiratory oxidase family. In terms of assembly, associates with subunits II, III and IV to form cytochrome c oxidase. Cu(2+) serves as cofactor. Requires heme as cofactor.

Its subcellular location is the cell membrane. It carries out the reaction 4 Fe(II)-[cytochrome c] + O2 + 8 H(+)(in) = 4 Fe(III)-[cytochrome c] + 2 H2O + 4 H(+)(out). The protein operates within energy metabolism; oxidative phosphorylation. In terms of biological role, cytochrome c oxidase is the component of the respiratory chain that catalyzes the reduction of oxygen to water. Subunits 1-3 form the functional core of the enzyme complex. CO I is the catalytic subunit of the enzyme. Electrons originating in cytochrome c are transferred via the copper A center of subunit 2 and heme A of subunit 1 to the bimetallic center formed by heme A3 and copper B. The sequence is that of Putative cytochrome c oxidase subunit 1-beta (ctaD2) from Streptomyces coelicolor (strain ATCC BAA-471 / A3(2) / M145).